A 149-amino-acid chain; its full sequence is MADQLTDDQISEFKEAFSLFDKDGDGCITTKELGTVMRSLGQNPTEAELQDMINEVDADGNGTIDFPEFLNLMARKMKDTDSEEELKEAFRVFDKDQNGFISAAELRHVMTNLGEKLTDEEVDEMIREADVDGDGQINYDEFVKVMMAK.

Residue Ala-2 is modified to N-acetylalanine. 4 EF-hand domains span residues 8–43, 44–79, 81–116, and 117–149; these read DQISEFKEAFSLFDKDGDGCITTKELGTVMRSLGQN, PTEAELQDMINEVDADGNGTIDFPEFLNLMARKMKD, DSEEELKEAFRVFDKDQNGFISAAELRHVMTNLGEK, and LTDEEVDEMIREADVDGDGQINYDEFVKVMMAK. Residues Asp-21, Asp-23, Asp-25, Cys-27, Glu-32, Asp-57, Asp-59, Asn-61, Thr-63, Glu-68, Asp-94, Asp-96, Asn-98, and Glu-105 each contribute to the Ca(2+) site. N6,N6,N6-trimethyllysine is present on Lys-116. Ca(2+)-binding residues include Asp-130, Asp-132, Asp-134, Gln-136, and Glu-141.

It belongs to the calmodulin family.

Its function is as follows. Calmodulin mediates the control of a large number of enzymes, ion channels and other proteins by Ca(2+). Among the enzymes to be stimulated by the calmodulin-Ca(2+) complex are a number of protein kinases and phosphatases. In Capsicum annuum (Capsicum pepper), this protein is Calmodulin (CCM1).